The sequence spans 475 residues: DNA-binding protein D-ETS-6 (475 aa).

Residues 42 to 150 are disordered; the sequence is SIGSGNETKL…VSPVEVPVDP (109 aa). The segment covering 70-108 has biased composition (low complexity); it reads SSSSTSDSSASSYSSTDSDSGSSTSSSSIRSQLPALNLP. Residues 109–121 show a composition bias toward pro residues; the sequence is VPLPLATPTPPAV. The segment covering 122–144 has biased composition (low complexity); it reads SSPHQAPSPRRNSSDSNRSVSPV. In terms of domain architecture, PNT spans 132–219; it reads RNSSDSNRSV…QHFAISLYHA (88 aa). Positions 255–335 form a DNA-binding region, ETS; that stretch reads IQLWQFLLEL…HGKRYAYKFD (81 aa). A disordered region spans residues 350–475; the sequence is GDPASSMLGS…PVTPTTNAFN (126 aa). Over residues 375–388 the composition is skewed to basic residues; sequence PPLHHHPQHSHPHH. The segment covering 401–436 has biased composition (low complexity); sequence SSPASNSSSLGFPSSSTASSQASPGQAPASSSASTS. Residues 453-475 are compositionally biased toward polar residues; that stretch reads RTSTSSAGNYDQGPVTPTTNAFN.

Belongs to the ETS family. As to expression, embryonic ventral nervous system and 1 pair of neurons in each thoracic segment.

It is found in the nucleus. In Drosophila melanogaster (Fruit fly), this protein is DNA-binding protein D-ETS-6 (Ets21C).